Consider the following 734-residue polypeptide: Photosystem I P700 chlorophyll a apoprotein A2 (734 aa).

8 helical membrane-spanning segments follow: residues 46–69 (IFAS…FHVA), 135–158 (LYTG…LHLQ), 175–199 (LNHH…HVAI), 273–291 (MAHH…GHMY), 330–353 (LHFQ…QHMY), 369–395 (AALY…IFFI), 417–439 (AIIS…LYVH), and 517–535 (FLVH…LILV). The [4Fe-4S] cluster site is built by Cys-559 and Cys-568. The next 2 helical transmembrane spans lie at 575–596 (AFYL…YWHW) and 643–665 (LSVW…MFLI). The chlorophyll a site is built by His-654, Met-662, and Tyr-670. Trp-671 contributes to the phylloquinone binding site. A helical transmembrane segment spans residues 707–727 (LVGLAHFSVGYIFTYAAFLIA).

This sequence belongs to the PsaA/PsaB family. As to quaternary structure, the PsaA/B heterodimer binds the P700 chlorophyll special pair and subsequent electron acceptors. PSI consists of a core antenna complex that captures photons, and an electron transfer chain that converts photonic excitation into a charge separation. The eukaryotic PSI reaction center is composed of at least 11 subunits. The cofactor is P700 is a chlorophyll a/chlorophyll a' dimer, A0 is one or more chlorophyll a, A1 is one or both phylloquinones and FX is a shared 4Fe-4S iron-sulfur center..

It is found in the plastid. The protein localises to the chloroplast thylakoid membrane. The enzyme catalyses reduced [plastocyanin] + hnu + oxidized [2Fe-2S]-[ferredoxin] = oxidized [plastocyanin] + reduced [2Fe-2S]-[ferredoxin]. PsaA and PsaB bind P700, the primary electron donor of photosystem I (PSI), as well as the electron acceptors A0, A1 and FX. PSI is a plastocyanin-ferredoxin oxidoreductase, converting photonic excitation into a charge separation, which transfers an electron from the donor P700 chlorophyll pair to the spectroscopically characterized acceptors A0, A1, FX, FA and FB in turn. Oxidized P700 is reduced on the lumenal side of the thylakoid membrane by plastocyanin. The polypeptide is Photosystem I P700 chlorophyll a apoprotein A2 (Solanum tuberosum (Potato)).